The following is a 660-amino-acid chain: Phosphatidylinositol-3-phosphate phosphatase MTMR7 (660 aa).

Residues glycine 126 to tyrosine 504 enclose the Myotubularin phosphatase domain. A 1,2-diacyl-sn-glycero-3-phospho-(1D-myo-inositol-3-phosphate)-binding residues include asparagine 250, asparagine 275, and isoleucine 276. The Phosphocysteine intermediate role is filled by cysteine 338. Positions 339, 340, 341, 342, 343, 344, and 384 each coordinate a 1,2-diacyl-sn-glycero-3-phospho-(1D-myo-inositol-3-phosphate). Residues leucine 521–asparagine 551 are a coiled coil. The interval lysine 554–alanine 660 is disordered. A compositionally biased stretch (polar residues) spans serine 566–glutamine 596. Phosphothreonine is present on threonine 578. Residues alanine 641–aspartate 653 are compositionally biased toward basic and acidic residues.

It belongs to the protein-tyrosine phosphatase family. Non-receptor class myotubularin subfamily. As to quaternary structure, heterodimer (via C-terminus) with MTMR9 (via coiled coil domain); the interaction enhances MTMR7 catalytic activity. Does not homodimerize. Interacts with RAB1B (in GDP-bound form). In terms of tissue distribution, expressed specifically in brain.

The protein resides in the cytoplasm. It is found in the endomembrane system. It carries out the reaction a 1,2-diacyl-sn-glycero-3-phospho-(1D-myo-inositol-3-phosphate) + H2O = a 1,2-diacyl-sn-glycero-3-phospho-(1D-myo-inositol) + phosphate. The enzyme catalyses 1D-myo-inositol 1,3-bisphosphate + H2O = 1D-myo-inositol 1-phosphate + phosphate. Interaction with MTMR9 increases phosphatase activity. Its function is as follows. Lipid phosphatase that specifically dephosphorylates the D-3 position of phosphatidylinositol 3-phosphate (PtdIns(3)P) and inositol 1,3-bisphosphate (Ins(1,3)P2). In Homo sapiens (Human), this protein is Phosphatidylinositol-3-phosphate phosphatase MTMR7.